We begin with the raw amino-acid sequence, 367 residues long: Endopolygalacturonase B (367 aa).

The signal sequence occupies residues 1–17 (MHFQLLGLAALGSLAAA). Residues 18 to 30 (APAPSRTSELVER) constitute a propeptide that is removed on maturation. A disulfide bridge connects residues Cys-34 and Cys-49. PbH1 repeat units lie at residues 161–191 (GNDV…DVSE), 192–213 (SNGV…AINS), 214–234 (GENI…SIGS), 243–264 (VKNV…RIKT), and 272–294 (VSGV…VIEQ). Asp-206 (proton donor) is an active-site residue. Cys-208 and Cys-224 are disulfide-bonded. Residue His-228 is part of the active site. Residue Asn-279 is glycosylated (N-linked (GlcNAc...) asparagine). 2 cysteine pairs are disulfide-bonded: Cys-334-Cys-339 and Cys-358-Cys-367.

Belongs to the glycosyl hydrolase 28 family.

Its subcellular location is the secreted. The catalysed reaction is (1,4-alpha-D-galacturonosyl)n+m + H2O = (1,4-alpha-D-galacturonosyl)n + (1,4-alpha-D-galacturonosyl)m.. In terms of biological role, involved in maceration and soft-rotting of plant tissue. Hydrolyzes the 1,4-alpha glycosidic bonds of de-esterified pectate in the smooth region of the plant cell wall. In Aspergillus flavus (strain ATCC MYA-384 / AF70), this protein is Endopolygalacturonase B (pgaB).